Reading from the N-terminus, the 159-residue chain is FCS-Like Zinc finger 2 (159 aa).

The FLZ-type zinc-finger motif lies at 75–119; that stretch reads HFLDSCFLCKKRLGDNRDIFMYRGDTPFCSEECREEQIERDEAKE. Positions 113–122 are enriched in basic and acidic residues; sequence ERDEAKEKKQ. The disordered stretch occupies residues 113–159; the sequence is ERDEAKEKKQSLSTSVKAMRRNEKRSSSSSPTRSRNYAFRTGTVAAA.

It belongs to the FLZ family. In terms of assembly, interacts with KIN10 and KIN11 via its FLZ-type zinc finger domain. Interacts with KINB1, KINB2, KINB3 and SNF4 via its N-terminal part. Forms heterodimer with FLZ7, FLZ10, FLZ11, FLZ12, FLZ15, FLZ17 and FLZ18 in vitro.

Its function is as follows. May act as an adapter to facilitate the interaction of SnRK1 complex with effector proteins, conferring tissue- and stimulus-type specific differences in the SnRK1 regulation pathway. This is FCS-Like Zinc finger 2 from Arabidopsis thaliana (Mouse-ear cress).